The primary structure comprises 539 residues: Lysophospholipid acyltransferase LPEAT2 (539 aa).

A helical membrane pass occupies residues 93 to 113; that stretch reads LVICLPIALIRLVLFAASLAV. The HXXXXD motif signature appears at 178–183; the sequence is HVSYIE. EF-hand domains lie at 426–455, 457–492, and 493–528; these read KRIF…VLTQ, LFKQ…TIPN, and LNKD…NPLL. The Ca(2+) site is built by Asp-470, Asp-472, Asp-474, Tyr-476, Glu-481, Asp-506, Asp-508, Asp-510, Arg-512, and Asp-517.

Belongs to the 1-acyl-sn-glycerol-3-phosphate acyltransferase family.

It localises to the golgi apparatus membrane. Its subcellular location is the late endosome membrane. It carries out the reaction a 1-acyl-sn-glycero-3-phosphoethanolamine + an acyl-CoA = a 1,2-diacyl-sn-glycero-3-phosphoethanolamine + CoA. The catalysed reaction is a 1-acyl-sn-glycero-3-phosphocholine + an acyl-CoA = a 1,2-diacyl-sn-glycero-3-phosphocholine + CoA. The enzyme catalyses a 1-acyl-sn-glycero-3-phospho-L-serine + an acyl-CoA = a 1,2-diacyl-sn-glycero-3-phospho-L-serine + CoA. It participates in lipid metabolism; phospholipid metabolism. In terms of biological role, possesses acyl-CoA-dependent lysophospholipid acyltransferase activity with a subset of lysophospholipids as substrates. Exhibits strong acylation activity on lysophosphatidylethanolamine (LPE), and lower activity on lysophosphatidylcholine (LPC) and lysophosphatidylserine (LPS). Exhibits acylation activity on both LPE and LPC. Has a preference for 18:1-LPE over 16:0-LPE as acceptor. Palmitoyl-CoA (16:0-CoA) is a better acyl donor than oleoyl-CoA (18:1-CoA). Among several different acyl-CoA species the best acyl donor is eicosanoyl-CoA (20:0-CoA). Activity is calcium-independent. Its activity is essential for maintaining adequate levels of phosphatidylethanolamine (PE), LPE and LPC in the cells, which is crucial for plant growth regulation. In Arabidopsis thaliana (Mouse-ear cress), this protein is Lysophospholipid acyltransferase LPEAT2.